A 509-amino-acid chain; its full sequence is MPLRGLAKAKNFTLGPTAPMKTFTENVHSQNNEINNLKKIDKTHNLTNNSQNEKLYKYESQIKSSFDRIVPTLKEIARIQHHEDFINTAQSISKQNLGINLPTHILDKSWVKPLDMRALYAWCAFKQHEKLSDNFFENDPLEGSFGSPNANNFETALLDCGIHLLDITPCSDGRLAHSVAYVMRIPFSAVRRRSHAGALFDIENTVNRWVKTEHKRYRENNPNEAHEDTRYLKIVTYHFSSVDPLHQGCAAHGSDDKLAAKEGSEKLLAFKEAVENSFCCGASVDLMLIGLDTDTDSLKIHLSSSDGKIDLENTISSLDIYNSTINFSKDEAEKEICQIISGNSNKVQLKGLDKFVYKLIVNNISQIDYVKKFHKGSYEDIGHAERFIGVGIGFKEVHLRNLTYFAHLDTVEEGAPDLDVGVKIFTGLNVSQDLPIPIVIRFDYSGKVPGAKERAAKDCYRVNNAISIRYKSLVDKGLLHTCLTIRDRDNIHSAQIIGMSLDQKTKEAH.

Residue C170 participates in Zn(2+) binding. Residue D172 is the Proton acceptor of the active site. Positions 238 and 249 each coordinate Zn(2+).

It belongs to the beta-class carbonic anhydrase family. CsoSCA subfamily. In terms of assembly, homodimer. Zn(2+) is required as a cofactor.

The protein localises to the carboxysome. It catalyses the reaction hydrogencarbonate + H(+) = CO2 + H2O. Its function is as follows. Reversible hydration of carbon dioxide. Essential for photosynthetic carbon dioxide fixation, supplies CO(2) to RuBisCO (ribulose bisphosphate carboxylase, cbbL-cbbS) in the carboxysome. There are estimated to be 29 CsoSCA oligomers per carboxysome. The chain is Carboxysome shell carbonic anhydrase from Prochlorococcus marinus subsp. pastoris (strain CCMP1986 / NIES-2087 / MED4).